The sequence spans 145 residues: D-aminoacyl-tRNA deacylase (145 aa).

Positions 137–138 (GP) match the Gly-cisPro motif, important for rejection of L-amino acids motif.

The protein belongs to the DTD family. As to quaternary structure, homodimer.

The protein resides in the cytoplasm. It carries out the reaction glycyl-tRNA(Ala) + H2O = tRNA(Ala) + glycine + H(+). The catalysed reaction is a D-aminoacyl-tRNA + H2O = a tRNA + a D-alpha-amino acid + H(+). An aminoacyl-tRNA editing enzyme that deacylates mischarged D-aminoacyl-tRNAs. Also deacylates mischarged glycyl-tRNA(Ala), protecting cells against glycine mischarging by AlaRS. Acts via tRNA-based rather than protein-based catalysis; rejects L-amino acids rather than detecting D-amino acids in the active site. By recycling D-aminoacyl-tRNA to D-amino acids and free tRNA molecules, this enzyme counteracts the toxicity associated with the formation of D-aminoacyl-tRNA entities in vivo and helps enforce protein L-homochirality. This is D-aminoacyl-tRNA deacylase from Escherichia coli O81 (strain ED1a).